The sequence spans 348 residues: Large ribosomal subunit protein uL10 (348 aa).

Positions 291–348 (LPEELRGVSAADTGAAEEEESTDEEAADADQADAAEDDDAADDDGDDEDAGDALGSLF) are disordered. The span at 305–341 (AAEEEESTDEEAADADQADAAEDDDAADDDGDDEDAG) shows a compositional bias: acidic residues.

The protein belongs to the universal ribosomal protein uL10 family. As to quaternary structure, part of the 50S ribosomal subunit. Forms part of the ribosomal stalk which helps the ribosome interact with GTP-bound translation factors. Forms a heptameric L10(L12)2(L12)2(L12)2 complex, where L10 forms an elongated spine to which the L12 dimers bind in a sequential fashion.

Forms part of the ribosomal stalk, playing a central role in the interaction of the ribosome with GTP-bound translation factors. The polypeptide is Large ribosomal subunit protein uL10 (Haloferax volcanii (strain ATCC 29605 / DSM 3757 / JCM 8879 / NBRC 14742 / NCIMB 2012 / VKM B-1768 / DS2) (Halobacterium volcanii)).